Reading from the N-terminus, the 282-residue chain is DNA-3-methyladenine glycosylase 2 (282 aa).

The active-site Proton acceptor is the aspartate 238.

Belongs to the alkylbase DNA glycosidase AlkA family. As to quaternary structure, monomer.

It carries out the reaction Hydrolysis of alkylated DNA, releasing 3-methyladenine, 3-methylguanine, 7-methylguanine and 7-methyladenine.. Functionally, hydrolysis of the deoxyribose N-glycosidic bond to excise 3-methyladenine, 3-methylguanine, 7-methylguanine, O2-methylthymine, and O2-methylcytosine from the damaged DNA polymer formed by alkylation lesions. The protein is DNA-3-methyladenine glycosylase 2 (alkA) of Escherichia coli (strain K12).